The chain runs to 60 residues: Large ribosomal subunit protein uL30 (60 aa).

It belongs to the universal ribosomal protein uL30 family. As to quaternary structure, part of the 50S ribosomal subunit.

The sequence is that of Large ribosomal subunit protein uL30 from Acidothermus cellulolyticus (strain ATCC 43068 / DSM 8971 / 11B).